Here is a 505-residue protein sequence, read N- to C-terminus: Proton-coupled zinc antiporter SLC30A1 (505 aa).

The Cytoplasmic segment spans residues Met1–Arg10. A helical membrane pass occupies residues Leu11–Val31. The Extracellular segment spans residues Thr32 to Leu35. Residues Ala36–Val56 form a helical membrane-spanning segment. Zn(2+)-binding residues include His43 and Asp47. At Ala57 to Met80 the chain is on the cytoplasmic side. The helical transmembrane segment at Gly81 to Ile101 threads the bilayer. Residues Glu102 to Pro113 lie on the Extracellular side of the membrane. A helical membrane pass occupies residues Leu114–Phe134. Over His135–Val246 the chain is Cytoplasmic. The segment at Gln142 to Thr215 is disordered. The span at Thr187–Gly199 shows a compositional bias: polar residues. The span at Asp203–Asp214 shows a compositional bias: basic and acidic residues. Residues Phe247 to Phe267 traverse the membrane as a helical segment. His249 and Asp253 together coordinate Zn(2+). Over Tyr268–Ala306 the chain is Extracellular. A glycan (N-linked (GlcNAc...) asparagine) is linked at Asn297. The chain crosses the membrane as a helical span at residues Gly307–Leu327. The Cytoplasmic segment spans residues Tyr328–Leu505. Position 504 is a phosphoserine (Ser504).

This sequence belongs to the cation diffusion facilitator (CDF) transporter (TC 2.A.4) family. SLC30A subfamily. As to quaternary structure, homodimer. Interacts with TMEM163. Interacts and forms a complex with TMC6 and TMC8; the interaction regulates zinc transport into the ER.

The protein resides in the cell membrane. Its subcellular location is the basolateral cell membrane. The protein localises to the cytoplasmic vesicle membrane. It is found in the cytoplasm. It localises to the endoplasmic reticulum membrane. The protein resides in the golgi apparatus membrane. Its subcellular location is the nucleus membrane. It catalyses the reaction Zn(2+)(in) + 2 H(+)(out) = Zn(2+)(out) + 2 H(+)(in). Zinc ion:proton antiporter that could function at the plasma membrane mediating zinc efflux from cells against its electrochemical gradient protecting them from intracellular zinc accumulation and toxicity. Alternatively, could prevent the transport to the plasma membrane of CACNB2, the L-type calcium channels regulatory subunit, through a yet to be defined mechanism. By modulating the expression of these channels at the plasma membrane, could prevent calcium and zinc influx into cells. By the same mechanism, could also prevent L-type calcium channels-mediated heavy metal influx into cells. In some cells, could also function as a zinc ion:proton antiporter mediating zinc entry into the lumen of cytoplasmic vesicles. In macrophages, can increase zinc ions concentration into the lumen of cytoplasmic vesicles containing engulfed bacteria and could help inactivate them. Forms a complex with TMC6/EVER1 and TMC8/EVER2 at the ER membrane of keratynocytes which facilitates zinc uptake into the ER. Down-regulates the activity of transcription factors induced by zinc and cytokines. In Macaca fascicularis (Crab-eating macaque), this protein is Proton-coupled zinc antiporter SLC30A1.